We begin with the raw amino-acid sequence, 545 residues long: ATP synthase subunit alpha (545 aa).

174 to 181 (GDRKTGKT) is a binding site for ATP.

It belongs to the ATPase alpha/beta chains family. In terms of assembly, F-type ATPases have 2 components, CF(1) - the catalytic core - and CF(0) - the membrane proton channel. CF(1) has five subunits: alpha(3), beta(3), gamma(1), delta(1), epsilon(1). CF(0) has three main subunits: a(1), b(2) and c(9-12). The alpha and beta chains form an alternating ring which encloses part of the gamma chain. CF(1) is attached to CF(0) by a central stalk formed by the gamma and epsilon chains, while a peripheral stalk is formed by the delta and b chains.

It localises to the cell membrane. The enzyme catalyses ATP + H2O + 4 H(+)(in) = ADP + phosphate + 5 H(+)(out). Its function is as follows. Produces ATP from ADP in the presence of a proton gradient across the membrane. The alpha chain is a regulatory subunit. The chain is ATP synthase subunit alpha from Cutibacterium acnes (strain DSM 16379 / KPA171202) (Propionibacterium acnes).